The primary structure comprises 335 residues: Glycerol-3-phosphate dehydrogenase [NAD(P)+] (335 aa).

Positions 12, 13, and 107 each coordinate NADPH. Residues Lys107, Gly138, and Ser140 each contribute to the sn-glycerol 3-phosphate site. Ala142 is a binding site for NADPH. Residues Lys193, Asp246, Ser256, Arg257, and Asn258 each coordinate sn-glycerol 3-phosphate. The active-site Proton acceptor is Lys193. An NADPH-binding site is contributed by Arg257. NADPH contacts are provided by Val281 and Glu283.

It belongs to the NAD-dependent glycerol-3-phosphate dehydrogenase family.

It localises to the cytoplasm. It carries out the reaction sn-glycerol 3-phosphate + NAD(+) = dihydroxyacetone phosphate + NADH + H(+). It catalyses the reaction sn-glycerol 3-phosphate + NADP(+) = dihydroxyacetone phosphate + NADPH + H(+). It participates in membrane lipid metabolism; glycerophospholipid metabolism. Functionally, catalyzes the reduction of the glycolytic intermediate dihydroxyacetone phosphate (DHAP) to sn-glycerol 3-phosphate (G3P), the key precursor for phospholipid synthesis. This Geobacter metallireducens (strain ATCC 53774 / DSM 7210 / GS-15) protein is Glycerol-3-phosphate dehydrogenase [NAD(P)+].